The primary structure comprises 243 residues: Ribonuclease PH (243 aa).

Residues R91 and 129–131 (GTR) contribute to the phosphate site.

Belongs to the RNase PH family. Homohexameric ring arranged as a trimer of dimers.

The enzyme catalyses tRNA(n+1) + phosphate = tRNA(n) + a ribonucleoside 5'-diphosphate. Phosphorolytic 3'-5' exoribonuclease that plays an important role in tRNA 3'-end maturation. Removes nucleotide residues following the 3'-CCA terminus of tRNAs; can also add nucleotides to the ends of RNA molecules by using nucleoside diphosphates as substrates, but this may not be physiologically important. Probably plays a role in initiation of 16S rRNA degradation (leading to ribosome degradation) during starvation. In Burkholderia mallei (strain NCTC 10247), this protein is Ribonuclease PH.